The sequence spans 101 residues: MSTSGAVDQYTVLTGDRSKIKDLLCSRLTECGWRDEVRLMCRNILMEKGTNNSFTVEQLIAEVTPKARTLVPDAVKKELLMKIRTILTEIEEEPDEPEDES.

Belongs to the ENY2 family. In terms of assembly, component of the nuclear pore complex (NPC)-associated TREX-2/AMEX complex (anchoring and mRNA export complex), composed of e(y)2, xmas and PCID2. Within the TREX-2/ AMEX complex, interactions with xmas is required for localization to the nuclear periphery. Component of the SAGA transcription coactivator-HAT complexes, at least composed of Ada2b, e(y)2, Pcaf/Gcn5, Taf10 and Nipped-A/Trrap. Within the SAGA complex, e(y)2, Sgf11, and not/nonstop form an additional subcomplex of SAGA called the DUB module (deubiquitination module). Component of the THO complex, composed of at least e(y)2, HPR1, THO2, THOC5, THOC6 and THOC7. Interacts with Taf9. Interacts with su(Hw) (via zinc fingers). Interacts with the nuclear pore complex (NPC). Interaction between the TREX-2/AMEX complex and the ORC complex is required for ORC localization to mRNPs, and consequently mRNA export. Within the TREX-2/AMEX-ORC complex, interacts with Orc6 and (via N-terminus or C-terminus) with Orc3. Interacts with the zinc finger protein CG9890. Ubiquitous.

It is found in the nucleus. Its subcellular location is the nucleoplasm. The protein localises to the cytoplasm. The protein resides in the nucleus membrane. Involved in mRNA export coupled transcription activation by association with both the TREX-2/AMEX and the SAGA complexes. The SAGA complex is a multiprotein complex that activates transcription by remodeling chromatin and mediating histone acetylation and deubiquitination. Within the SAGA complex, participates in a subcomplex that specifically deubiquitinates histone H2B. The SAGA complex is recruited to specific gene promoters by activators, where it is required for transcription. Required for nuclear receptor-mediated transactivation. Involved in transcription elongation by recruiting the THO complex onto nascent mRNA. The TREX-2/AMEX complex functions in docking export-competent ribonucleoprotein particles (mRNPs) to the nuclear entrance of the nuclear pore complex (nuclear basket). TREX-2/AMEX participates in mRNA export and accurate chromatin positioning in the nucleus by tethering genes to the nuclear periphery. Recruited to the su(Hw) insulators via its interaction with su(Hw) and participates in the barrier activity of such insulators. In contrast, it does not participate in the enhancer-blocking activity of the su(Hw) insulators. This is Enhancer of yellow 2 transcription factor from Drosophila melanogaster (Fruit fly).